A 238-amino-acid polypeptide reads, in one-letter code: Small ribosomal subunit protein uS2 (238 aa).

This sequence belongs to the universal ribosomal protein uS2 family.

This chain is Small ribosomal subunit protein uS2, found in Chloroflexus aurantiacus (strain ATCC 29366 / DSM 635 / J-10-fl).